Reading from the N-terminus, the 191-residue chain is Phosphoheptose isomerase (191 aa).

In terms of domain architecture, SIS spans 37-191; sequence IADSFKQDGK…IIQLIEKEME (155 aa). Residue 52 to 54 coordinates substrate; sequence NGG. Residues His-61 and Glu-65 each contribute to the Zn(2+) site. Substrate is bound by residues Glu-65, 93–94, 119–121, Ser-124, and Gln-172; these read ND and STS. Zn(2+) is bound by residues Gln-172 and His-180.

It belongs to the SIS family. GmhA subfamily. As to quaternary structure, homotetramer. Zn(2+) is required as a cofactor.

The protein resides in the cytoplasm. It catalyses the reaction 2 D-sedoheptulose 7-phosphate = D-glycero-alpha-D-manno-heptose 7-phosphate + D-glycero-beta-D-manno-heptose 7-phosphate. Its pathway is carbohydrate biosynthesis; D-glycero-D-manno-heptose 7-phosphate biosynthesis; D-glycero-alpha-D-manno-heptose 7-phosphate and D-glycero-beta-D-manno-heptose 7-phosphate from sedoheptulose 7-phosphate: step 1/1. The protein operates within bacterial outer membrane biogenesis; LPS core biosynthesis. In terms of biological role, catalyzes the isomerization of sedoheptulose 7-phosphate in D-glycero-D-manno-heptose 7-phosphate. The protein is Phosphoheptose isomerase of Vibrio parahaemolyticus serotype O3:K6 (strain RIMD 2210633).